The chain runs to 148 residues: MKLDLKILDARMRDYLPAYATAGSAGLDLRACLDAPLTLKPGDTALVPTGLAIHLADPNYAALILPRSGLGHKHGIVLGNLVGLIDSDYQGQLMVSTWNRGQTEFVLNPFERLAQLVIVPVVQAQFNIVDDFAQSERGAGGFGSTGRH.

Substrate contacts are provided by residues 67 to 69 (RSG), Asn-80, 84 to 86 (LID), and Met-94.

Belongs to the dUTPase family. Requires Mg(2+) as cofactor.

The catalysed reaction is dUTP + H2O = dUMP + diphosphate + H(+). The protein operates within pyrimidine metabolism; dUMP biosynthesis; dUMP from dCTP (dUTP route): step 2/2. This enzyme is involved in nucleotide metabolism: it produces dUMP, the immediate precursor of thymidine nucleotides and it decreases the intracellular concentration of dUTP so that uracil cannot be incorporated into DNA. The sequence is that of Deoxyuridine 5'-triphosphate nucleotidohydrolase from Burkholderia multivorans (strain ATCC 17616 / 249).